The primary structure comprises 373 residues: Flagellar P-ring protein (373 aa).

The N-terminal stretch at 1-28 (MPSVSAVILKLAAAALSALLLSGVAANA) is a signal peptide.

This sequence belongs to the FlgI family. The basal body constitutes a major portion of the flagellar organelle and consists of four rings (L,P,S, and M) mounted on a central rod.

It is found in the periplasm. It localises to the bacterial flagellum basal body. Its function is as follows. Assembles around the rod to form the L-ring and probably protects the motor/basal body from shearing forces during rotation. The protein is Flagellar P-ring protein of Rhodopseudomonas palustris (strain HaA2).